Consider the following 286-residue polypeptide: Pantothenate synthetase (286 aa).

ATP is bound at residue methionine 31–histidine 38. Histidine 38 serves as the catalytic Proton donor. Glutamine 62 is a (R)-pantoate binding site. Glutamine 62 contributes to the beta-alanine binding site. Glycine 148–aspartate 151 lines the ATP pocket. A (R)-pantoate-binding site is contributed by glutamine 154. ATP is bound by residues valine 177 and lysine 185 to arginine 188.

This sequence belongs to the pantothenate synthetase family. In terms of assembly, homodimer.

It is found in the cytoplasm. It catalyses the reaction (R)-pantoate + beta-alanine + ATP = (R)-pantothenate + AMP + diphosphate + H(+). The protein operates within cofactor biosynthesis; (R)-pantothenate biosynthesis; (R)-pantothenate from (R)-pantoate and beta-alanine: step 1/1. Its function is as follows. Catalyzes the condensation of pantoate with beta-alanine in an ATP-dependent reaction via a pantoyl-adenylate intermediate. In Staphylococcus epidermidis (strain ATCC 35984 / DSM 28319 / BCRC 17069 / CCUG 31568 / BM 3577 / RP62A), this protein is Pantothenate synthetase.